The primary structure comprises 372 residues: Spermidine/putrescine import ATP-binding protein PotA (372 aa).

One can recognise an ABC transporter domain in the interval 12–250 (VSIRSVRKVY…PRNRFVADFI (239 aa)). Residue 48–55 (GPSGCGKT) coordinates ATP.

Belongs to the ABC transporter superfamily. Spermidine/putrescine importer (TC 3.A.1.11.1) family. The complex is composed of two ATP-binding proteins (PotA), two transmembrane proteins (PotB and PotC) and a solute-binding protein (PotD).

It localises to the cell inner membrane. The enzyme catalyses ATP + H2O + polyamine-[polyamine-binding protein]Side 1 = ADP + phosphate + polyamineSide 2 + [polyamine-binding protein]Side 1.. In terms of biological role, part of the ABC transporter complex PotABCD involved in spermidine/putrescine import. Responsible for energy coupling to the transport system. In Pseudomonas fluorescens (strain ATCC BAA-477 / NRRL B-23932 / Pf-5), this protein is Spermidine/putrescine import ATP-binding protein PotA.